The sequence spans 356 residues: S-adenosylmethionine:tRNA ribosyltransferase-isomerase (356 aa).

This sequence belongs to the QueA family. As to quaternary structure, monomer.

Its subcellular location is the cytoplasm. The catalysed reaction is 7-aminomethyl-7-carbaguanosine(34) in tRNA + S-adenosyl-L-methionine = epoxyqueuosine(34) in tRNA + adenine + L-methionine + 2 H(+). It participates in tRNA modification; tRNA-queuosine biosynthesis. Functionally, transfers and isomerizes the ribose moiety from AdoMet to the 7-aminomethyl group of 7-deazaguanine (preQ1-tRNA) to give epoxyqueuosine (oQ-tRNA). The polypeptide is S-adenosylmethionine:tRNA ribosyltransferase-isomerase (Escherichia coli O81 (strain ED1a)).